We begin with the raw amino-acid sequence, 136 residues long: Small ribosomal subunit protein uS19 (136 aa).

Belongs to the universal ribosomal protein uS19 family.

In terms of biological role, protein S19 forms a complex with S13 that binds strongly to the 16S ribosomal RNA. The chain is Small ribosomal subunit protein uS19 (rps19) from Methanothermobacter thermautotrophicus (strain ATCC 29096 / DSM 1053 / JCM 10044 / NBRC 100330 / Delta H) (Methanobacterium thermoautotrophicum).